The sequence spans 88 residues: UPF0297 protein STER_1937 (88 aa).

This sequence belongs to the UPF0297 family.

This chain is UPF0297 protein STER_1937, found in Streptococcus thermophilus (strain ATCC BAA-491 / LMD-9).